The chain runs to 204 residues: Transcriptional regulator GfcR (204 aa).

It belongs to the purine/pyrimidine phosphoribosyltransferase family. GfcR subfamily.

The chain is Transcriptional regulator GfcR from Methanosarcina mazei (strain ATCC BAA-159 / DSM 3647 / Goe1 / Go1 / JCM 11833 / OCM 88) (Methanosarcina frisia).